A 546-amino-acid chain; its full sequence is Pectinesterase 1 (546 aa).

The N-terminal stretch at 1 to 39 is a signal peptide; sequence MANPQQPLLIKTHKQNPIISFKILSFVITLFVALFLVAP. Residues 40 to 229 constitute a propeptide that is removed on maturation; it reads YQVEIKHSNL…RKLMESSGKD (190 aa). Substrate-binding residues include Thr-308 and Gln-338. Cysteines 327 and 354 form a disulfide. Asp-361 (proton donor) is an active-site residue. The active-site Nucleophile is the Asp-382. The cysteines at positions 395 and 429 are disulfide-linked. Positions 450 and 452 each coordinate substrate.

In the N-terminal section; belongs to the PMEI family. The protein in the C-terminal section; belongs to the pectinesterase family.

Its subcellular location is the secreted. It is found in the cell wall. It catalyses the reaction [(1-&gt;4)-alpha-D-galacturonosyl methyl ester](n) + n H2O = [(1-&gt;4)-alpha-D-galacturonosyl](n) + n methanol + n H(+). Its pathway is glycan metabolism; pectin degradation; 2-dehydro-3-deoxy-D-gluconate from pectin: step 1/5. Pectinesterase may play a role in cell wall metabolism during fruit growth and development prior to ripening and may be required for preparing cell walls for softening by polygalacturonase during fruit ripening. This chain is Pectinesterase 1 (PME1.9), found in Solanum lycopersicum (Tomato).